The sequence spans 811 residues: G-type lectin S-receptor-like serine/threonine-protein kinase LECRK3 (811 aa).

Positions 1–23 (MAHLLFLPILQLLLLYCTKSAQA) are cleaved as a signal peptide. The region spanning 24-153 (QLNISIGSSL…DGATKWESFG (130 aa)) is the Bulb-type lectin domain. The Extracellular portion of the chain corresponds to 24–464 (QLNISIGSSL…DKKYWILGSS (441 aa)). Asn26, Asn39, Asn59, Asn219, Asn226, Asn237, and Asn242 each carry an N-linked (GlcNAc...) asparagine glycan. In terms of domain architecture, EGF-like; atypical spans 292-344 (PENICQSIQTMVGSGACGFNSYCTIDGTKNTTSCLCPQNYKFIDDKRKYKGCR). 5 disulfides stabilise this stretch: Cys296–Cys314, Cys308–Cys325, Cys327–Cys343, Cys389–Cys411, and Cys393–Cys399. A glycan (N-linked (GlcNAc...) asparagine) is linked at Asn321. A PAN domain is found at 352–430 (CDLDETTAML…GKMDVNVPRT (79 aa)). Residues 465–485 (LLFGSSVLVNFLLISVMLFGT) traverse the membrane as a helical segment. The Cytoplasmic segment spans residues 486–811 (YCSITSRKKI…DPSSYISSLA (326 aa)). Residues 521 to 795 (GGFQEVLGTG…KVTQMLDGAV (275 aa)) enclose the Protein kinase domain. Residues 527-535 (LGTGASGVV) and Lys551 each bind ATP. The Proton acceptor role is filled by Asp645.

Belongs to the protein kinase superfamily. Ser/Thr protein kinase family.

It is found in the membrane. The enzyme catalyses L-seryl-[protein] + ATP = O-phospho-L-seryl-[protein] + ADP + H(+). It catalyses the reaction L-threonyl-[protein] + ATP = O-phospho-L-threonyl-[protein] + ADP + H(+). Involved in resistance against the herbivorous insect brown planthopper (N.lugens, BPH). Member of the BPH3 (BPH resistance locus 3) cluster which contains LECRK1, LECRK2 and LECRK3. In Oryza sativa subsp. indica (Rice), this protein is G-type lectin S-receptor-like serine/threonine-protein kinase LECRK3.